Consider the following 161-residue polypeptide: Cyclic pyranopterin monophosphate synthase (161 aa).

Residues 76–78 and 114–115 contribute to the substrate site; these read MCH and ME. D129 is a catalytic residue.

It belongs to the MoaC family. In terms of assembly, homohexamer; trimer of dimers.

The catalysed reaction is (8S)-3',8-cyclo-7,8-dihydroguanosine 5'-triphosphate = cyclic pyranopterin phosphate + diphosphate. The protein operates within cofactor biosynthesis; molybdopterin biosynthesis. Its function is as follows. Catalyzes the conversion of (8S)-3',8-cyclo-7,8-dihydroguanosine 5'-triphosphate to cyclic pyranopterin monophosphate (cPMP). This is Cyclic pyranopterin monophosphate synthase from Clostridium acetobutylicum (strain ATCC 824 / DSM 792 / JCM 1419 / IAM 19013 / LMG 5710 / NBRC 13948 / NRRL B-527 / VKM B-1787 / 2291 / W).